The sequence spans 523 residues: Peptide chain release factor 3 (523 aa).

A tr-type G domain is found at 10–277 (NKRRTFAIIS…QFVDLAPAPG (268 aa)). GTP-binding positions include 19–26 (SHPDAGKT), 87–91 (DTPGH), and 141–144 (NKLD).

Belongs to the TRAFAC class translation factor GTPase superfamily. Classic translation factor GTPase family. PrfC subfamily.

The protein resides in the cytoplasm. Functionally, increases the formation of ribosomal termination complexes and stimulates activities of RF-1 and RF-2. It binds guanine nucleotides and has strong preference for UGA stop codons. It may interact directly with the ribosome. The stimulation of RF-1 and RF-2 is significantly reduced by GTP and GDP, but not by GMP. The sequence is that of Peptide chain release factor 3 from Lactobacillus delbrueckii subsp. bulgaricus (strain ATCC BAA-365 / Lb-18).